A 76-amino-acid chain; its full sequence is DNA-directed RNA polymerase subunit epsilon (76 aa).

The protein belongs to the RNA polymerase subunit epsilon family. RNAP is composed of a core of 2 alpha, a beta and a beta' subunit. The core is associated with a delta subunit, and at least one of epsilon or omega. When a sigma factor is associated with the core the holoenzyme is formed, which can initiate transcription.

It catalyses the reaction RNA(n) + a ribonucleoside 5'-triphosphate = RNA(n+1) + diphosphate. In terms of biological role, a non-essential component of RNA polymerase (RNAP). This Streptococcus sanguinis (strain SK36) protein is DNA-directed RNA polymerase subunit epsilon.